The sequence spans 1108 residues: Retinal guanylyl cyclase 2 (1108 aa).

An N-terminal signal peptide occupies residues 1 to 50 (MFLGLGRFSRLVLWFAAFRKLLGHHGLASAKFLWCLCLLSVMSLPQQVWT). The Extracellular portion of the chain corresponds to 51-467 (LPYKIGVVGP…KICHGGIDPA (417 aa)). Cysteine 104 and cysteine 132 are joined by a disulfide. Residues 468 to 490 (FAMMVCLTLLIALLSINGFAYFI) traverse the membrane as a helical segment. The Cytoplasmic segment spans residues 491–1108 (RRRINKIQLI…AERQLVRNKP (618 aa)). Residues 532–812 (FQITSEVQSG…DEIFNQFKTF (281 aa)) enclose the Protein kinase domain. The Guanylate cyclase domain occupies 884–1014 (TLYFSDIVGF…DTVNTASRME (131 aa)).

The protein belongs to the adenylyl cyclase class-4/guanylyl cyclase family. In terms of assembly, homodimer. Interacts with RD3; promotes the exit of GUCY2F from the endoplasmic reticulum and its trafficking to the photoreceptor outer segments. Post-translationally, there are 9 conserved cysteine residues in sensory guanylate cyclases, 6 in the extracellular domain, which may be involved in intra- or interchain disulfide bonds. In terms of tissue distribution, retina. Localized exclusively in the outer nuclear layer and inner segments of the rod and cone photoreceptor cells.

It localises to the photoreceptor outer segment membrane. The catalysed reaction is GTP = 3',5'-cyclic GMP + diphosphate. Activated by GUCA1B when free calcium ions concentration is low, and inhibited by GUCA1B when free calcium ions concentration is high. Inhibited by RD3. Functionally, responsible for the synthesis of cyclic GMP (cGMP) in rods and cones of photoreceptors. Plays an essential role in phototransduction, by mediating cGMP replenishment. May also participate in the trafficking of membrane-asociated proteins to the photoreceptor outer segment membrane. This chain is Retinal guanylyl cyclase 2 (GUCY2F), found in Homo sapiens (Human).